A 673-amino-acid polypeptide reads, in one-letter code: MSKPFKLNSAFKPSGDQPDAIRRLEEGLEDGLAHQTLLGVTGSGKTFTIANVIADLQRPTMVLAPNKTLAAQLYGEMKEFFPENAVEYFVSYYDYYQPEAYVPSSDTFIEKDASINEHIEQMRLSATKALLERRDVVVVASVSAIYGLGDPDLYLKMMLHLTVGMLIDQRAILRRLAELQYTRNDQAFQRGTFRVRGEVIDIFPAESDDIALRVELFDEEVERLSLFDPLTGQVESTVPRYTIYPKTHYVTPRERILQAMEEIKDELADRRKVLLANNKLLEEQRLSQRTQFDLEMMNELGYCSGIENYSRFLSGRGPGEPPPTLFDYLPADGLLVVDESHVTIPQIGGMYRGDRARKETLVEYGFRLPSALDNRPLKFEEFEALAPQTIYVSATPGNYELEKSGDEVVDQVVRPTGLLDPIIEVRPVATQVDDLLSEIRQRAAINERVLVTTLTKRMAEDLTEYLEEHGERVRYLHSDIDTVERMEIIRDLRLGEFDVLVGINLLREGLDMPEVSLVAILDADKEGFLRSERSLIQTIGRAARNVNGKAILYGDKITPSMAKAIGETERRREKQQKYNEEHGITPQGLNKKVVDILALGQNIAKTKAKGKGKGRSTAKAGIVELDMTPKALQQKIHELEGQMMQHAQNLEFEEAAQIRDQLHQLRELFIAAS.

Residues 26-414 (EGLEDGLAHQ…GDEVVDQVVR (389 aa)) form the Helicase ATP-binding domain. ATP is bound at residue 39–46 (GVTGSGKT). The Beta-hairpin motif lies at 92–115 (YYDYYQPEAYVPSSDTFIEKDASI). The 167-residue stretch at 431 to 597 (QVDDLLSEIR…GLNKKVVDIL (167 aa)) folds into the Helicase C-terminal domain. The UVR domain maps to 633–668 (QQKIHELEGQMMQHAQNLEFEEAAQIRDQLHQLREL).

It belongs to the UvrB family. In terms of assembly, forms a heterotetramer with UvrA during the search for lesions. Interacts with UvrC in an incision complex.

The protein resides in the cytoplasm. Its function is as follows. The UvrABC repair system catalyzes the recognition and processing of DNA lesions. A damage recognition complex composed of 2 UvrA and 2 UvrB subunits scans DNA for abnormalities. Upon binding of the UvrA(2)B(2) complex to a putative damaged site, the DNA wraps around one UvrB monomer. DNA wrap is dependent on ATP binding by UvrB and probably causes local melting of the DNA helix, facilitating insertion of UvrB beta-hairpin between the DNA strands. Then UvrB probes one DNA strand for the presence of a lesion. If a lesion is found the UvrA subunits dissociate and the UvrB-DNA preincision complex is formed. This complex is subsequently bound by UvrC and the second UvrB is released. If no lesion is found, the DNA wraps around the other UvrB subunit that will check the other stand for damage. The protein is UvrABC system protein B of Salmonella paratyphi A (strain ATCC 9150 / SARB42).